Here is a 411-residue protein sequence, read N- to C-terminus: Thyroxine-binding globulin (411 aa).

Positions 1-15 (MPLFSLVLLILGLHC) are cleaved as a signal peptide. N-linked (GlcNAc...) asparagine glycans are attached at residues asparagine 34, asparagine 97, asparagine 163, and asparagine 251. Residues asparagine 291 and lysine 394 each contribute to the thyroxine site.

It belongs to the serpin family. As to expression, expressed by the liver and secreted in plasma.

The protein localises to the secreted. Functionally, major thyroid hormone transport protein in serum. This is Thyroxine-binding globulin (SERPINA7) from Bos taurus (Bovine).